The primary structure comprises 510 residues: Probable cytosol aminopeptidase (510 aa).

Mn(2+) contacts are provided by Lys-272 and Asp-277. Lys-284 is a catalytic residue. The Mn(2+) site is built by Asp-296, Asp-355, and Glu-357. Residue Arg-359 is part of the active site.

It belongs to the peptidase M17 family. The cofactor is Mn(2+).

Its subcellular location is the cytoplasm. It catalyses the reaction Release of an N-terminal amino acid, Xaa-|-Yaa-, in which Xaa is preferably Leu, but may be other amino acids including Pro although not Arg or Lys, and Yaa may be Pro. Amino acid amides and methyl esters are also readily hydrolyzed, but rates on arylamides are exceedingly low.. The enzyme catalyses Release of an N-terminal amino acid, preferentially leucine, but not glutamic or aspartic acids.. In terms of biological role, presumably involved in the processing and regular turnover of intracellular proteins. Catalyzes the removal of unsubstituted N-terminal amino acids from various peptides. This chain is Probable cytosol aminopeptidase, found in Synechococcus sp. (strain JA-3-3Ab) (Cyanobacteria bacterium Yellowstone A-Prime).